The chain runs to 379 residues: L-lactate dehydrogenase (379 aa).

The FMN hydroxy acid dehydrogenase domain maps to 1-379 (MIISSSTDYR…ISPDSLVRGL (379 aa)). Tyrosine 24 is a substrate binding site. Serine 106 and glutamine 127 together coordinate FMN. A substrate-binding site is contributed by tyrosine 129. An FMN-binding site is contributed by threonine 155. Arginine 164 lines the substrate pocket. An FMN-binding site is contributed by lysine 251. Histidine 275 serves as the catalytic Proton acceptor. Arginine 278 is a binding site for substrate. 306-330 (DSGIRSGLDVVRMIAQGADGVLIGR) contacts FMN.

Belongs to the FMN-dependent alpha-hydroxy acid dehydrogenase family. Requires FMN as cofactor.

The protein localises to the cell inner membrane. It carries out the reaction (S)-lactate + A = pyruvate + AH2. Catalyzes the conversion of L-lactate to pyruvate. Is coupled to the respiratory chain. In Allorhizobium ampelinum (strain ATCC BAA-846 / DSM 112012 / S4) (Agrobacterium vitis (strain S4)), this protein is L-lactate dehydrogenase.